The sequence spans 495 residues: ATP synthase subunit beta, chloroplastic (495 aa).

An ATP-binding site is contributed by 172 to 179; it reads GGAGVGKT.

This sequence belongs to the ATPase alpha/beta chains family. In terms of assembly, F-type ATPases have 2 components, CF(1) - the catalytic core - and CF(0) - the membrane proton channel. CF(1) has five subunits: alpha(3), beta(3), gamma(1), delta(1), epsilon(1). CF(0) has four main subunits: a(1), b(1), b'(1) and c(9-12).

It localises to the plastid. Its subcellular location is the chloroplast thylakoid membrane. The catalysed reaction is ATP + H2O + 4 H(+)(in) = ADP + phosphate + 5 H(+)(out). Produces ATP from ADP in the presence of a proton gradient across the membrane. The catalytic sites are hosted primarily by the beta subunits. In Scilla siberica (Siberian squill), this protein is ATP synthase subunit beta, chloroplastic.